Reading from the N-terminus, the 336-residue chain is Ethanol acetyltransferase 1 (336 aa).

The N-terminal 14 residues, 1–14 (MFPTRVLRSTLQKL), are a transit peptide targeting the mitochondrion. Residues 44 to 296 (PIVFLHGIFG…VNSSHDILDQ (253 aa)) form the AB hydrolase-1 domain. Residues Ser-117, Asp-141, and His-291 each act as charge relay system in the active site.

Belongs to the AB hydrolase superfamily.

The protein resides in the mitochondrion. It carries out the reaction ethanol + acetyl-CoA = ethyl acetate + CoA. The catalysed reaction is acetyl-CoA + H2O = acetate + CoA + H(+). The enzyme catalyses ethyl acetate + H2O = ethanol + acetate + H(+). Alcohol acetyltransferase that catalyzes the synthesis of ethyl acetate from ethanol and acetyl-CoA. Can also function as a thioesterase by hydrolyzing acetyl-CoA in the absence of ethanol, as well as esterase hydrolyzing ethyl acetate. This is Ethanol acetyltransferase 1 (EAT1) from Cyberlindnera jadinii (strain ATCC 18201 / CBS 1600 / BCRC 20928 / JCM 3617 / NBRC 0987 / NRRL Y-1542) (Torula yeast).